Consider the following 252-residue polypeptide: Acyl-coenzyme A diphosphatase FITM2 (252 aa).

The Cytoplasmic segment spans residues 1-25 (MAAAVAGSLVDKLVCLWRQPYTRIY). A helical transmembrane segment spans residues 26 to 46 (LPHLFFCISLVGSVLKNAELV). The Lumenal portion of the chain corresponds to 47–59 (PESYFSSSRNVLN). A helical membrane pass occupies residues 60 to 80 (LYFVKVSWGWTIVLLLPFIAY). Over 81–94 (SNFYIKSHMFALRR) the chain is Cytoplasmic. The chain crosses the membrane as a helical span at residues 95 to 115 (LTSLLVATLVWYICTETFFYI). Residues 116–156 (EDITGSCYESNTMVVIRGEFDTKAACRKAGFFWDGFDISGH) lie on the Lumenal side of the membrane. Residue H156 is part of the active site. A helical transmembrane segment spans residues 157 to 177 (SFILSYSSLVIMEEMVPMLHI). The Cytoplasmic portion of the chain corresponds to 178–190 (QPAYRNPPLDCLY). A helical membrane pass occupies residues 191–211 (LALNVIVAIWIWMFGCTSVYF). H212 is an active-site residue. Over 212-223 (HDIIDKILGTSC) the chain is Lumenal. The chain crosses the membrane as a helical span at residues 224–244 (GILGWYMTYKVWYVKLFSPGL). At 245 to 252 (PPQPKQHT) the chain is on the cytoplasmic side.

It belongs to the FIT family. FIT2 subfamily. As to expression, widely expressed.

The protein resides in the endoplasmic reticulum membrane. It carries out the reaction an acyl-CoA + H2O = an acyl-4'-phosphopantetheine + adenosine 3',5'-bisphosphate + 2 H(+). In terms of biological role, fatty acyl-coenzyme A (CoA) diphosphatase that hydrolyzes fatty acyl-CoA to yield acyl-4'-phosphopantetheine and adenosine 3',5'-bisphosphate. Preferentially hydrolyzes unsaturated long-chain acyl-CoA substrates in the endoplasmic reticulum (ER) lumen. This catalytic activity is required for maintaining ER structure and for lipid droplets (LDs) biogenesis, which are lipid storage organelles involved in maintaining lipid and energy homeostasis. Required for lipid droplet accumulation in liver and intestine during embryogenesis. May directly bind to diacylglycerol (DAGs) and triacylglycerol, which is also important for LD biogenesis. May support directional budding of nacent LDs from the ER into the cytosol by reducing DAG levels at sites of LD formation. May play a role in the regulation of cell morphology, ER morphology and cytoskeletal organization. The protein is Acyl-coenzyme A diphosphatase FITM2 of Danio rerio (Zebrafish).